The sequence spans 368 residues: Histidinol-phosphate aminotransferase (368 aa).

Lysine 223 bears the N6-(pyridoxal phosphate)lysine mark.

It belongs to the class-II pyridoxal-phosphate-dependent aminotransferase family. Histidinol-phosphate aminotransferase subfamily. In terms of assembly, homodimer. Pyridoxal 5'-phosphate serves as cofactor.

The enzyme catalyses L-histidinol phosphate + 2-oxoglutarate = 3-(imidazol-4-yl)-2-oxopropyl phosphate + L-glutamate. Its pathway is amino-acid biosynthesis; L-histidine biosynthesis; L-histidine from 5-phospho-alpha-D-ribose 1-diphosphate: step 7/9. This chain is Histidinol-phosphate aminotransferase, found in Rhodospirillum rubrum (strain ATCC 11170 / ATH 1.1.1 / DSM 467 / LMG 4362 / NCIMB 8255 / S1).